Reading from the N-terminus, the 404-residue chain is Cysteine desulfurase IscS (404 aa).

Pyridoxal 5'-phosphate is bound by residues 75-76 (AT), Asn155, Gln183, and 203-205 (SAH). Lys206 is subject to N6-(pyridoxal phosphate)lysine. Position 243 (Thr243) interacts with pyridoxal 5'-phosphate. Cys328 (cysteine persulfide intermediate) is an active-site residue. Position 328 (Cys328) interacts with [2Fe-2S] cluster.

Belongs to the class-V pyridoxal-phosphate-dependent aminotransferase family. NifS/IscS subfamily. As to quaternary structure, homodimer. Forms a heterotetramer with IscU, interacts with other sulfur acceptors. The cofactor is pyridoxal 5'-phosphate.

It is found in the cytoplasm. The catalysed reaction is (sulfur carrier)-H + L-cysteine = (sulfur carrier)-SH + L-alanine. It participates in cofactor biosynthesis; iron-sulfur cluster biosynthesis. Master enzyme that delivers sulfur to a number of partners involved in Fe-S cluster assembly, tRNA modification or cofactor biosynthesis. Catalyzes the removal of elemental sulfur atoms from cysteine to produce alanine. Functions as a sulfur delivery protein for Fe-S cluster synthesis onto IscU, an Fe-S scaffold assembly protein, as well as other S acceptor proteins. The polypeptide is Cysteine desulfurase IscS (Pseudomonas putida (strain ATCC 700007 / DSM 6899 / JCM 31910 / BCRC 17059 / LMG 24140 / F1)).